Here is a 407-residue protein sequence, read N- to C-terminus: Multifunctional CCA protein (407 aa).

ATP contacts are provided by glycine 8 and arginine 11. Residues glycine 8 and arginine 11 each contribute to the CTP site. Mg(2+) contacts are provided by aspartate 21 and aspartate 23. ATP contacts are provided by arginine 91, arginine 137, and arginine 140. Residues arginine 91, arginine 137, and arginine 140 each coordinate CTP. The HD domain maps to 228-329 (TGVHALMALA…VALFDRVDAW (102 aa)).

This sequence belongs to the tRNA nucleotidyltransferase/poly(A) polymerase family. Bacterial CCA-adding enzyme type 1 subfamily. As to quaternary structure, monomer. Can also form homodimers and oligomers. Requires Mg(2+) as cofactor. It depends on Ni(2+) as a cofactor.

It carries out the reaction a tRNA precursor + 2 CTP + ATP = a tRNA with a 3' CCA end + 3 diphosphate. It catalyses the reaction a tRNA with a 3' CCA end + 2 CTP + ATP = a tRNA with a 3' CCACCA end + 3 diphosphate. Catalyzes the addition and repair of the essential 3'-terminal CCA sequence in tRNAs without using a nucleic acid template. Adds these three nucleotides in the order of C, C, and A to the tRNA nucleotide-73, using CTP and ATP as substrates and producing inorganic pyrophosphate. tRNA 3'-terminal CCA addition is required both for tRNA processing and repair. Also involved in tRNA surveillance by mediating tandem CCA addition to generate a CCACCA at the 3' terminus of unstable tRNAs. While stable tRNAs receive only 3'-terminal CCA, unstable tRNAs are marked with CCACCA and rapidly degraded. The polypeptide is Multifunctional CCA protein (Erwinia tasmaniensis (strain DSM 17950 / CFBP 7177 / CIP 109463 / NCPPB 4357 / Et1/99)).